A 176-amino-acid chain; its full sequence is Probable DNA-directed RNA polymerase subunit delta (176 aa).

Positions 14–81 (KSFIDMAYTL…GENLWGLRDW (68 aa)) constitute an HTH HARE-type domain. Positions 114-176 (LGEDEMDDDD…DFEDEEDFKA (63 aa)) are disordered. 2 stretches are compositionally biased toward acidic residues: residues 116 to 145 (EDEM…QVEE) and 153 to 176 (VIEE…DFKA).

The protein belongs to the RpoE family. RNAP is composed of a core of 2 alpha, a beta and a beta' subunits. The core is associated with a delta subunit and one of several sigma factors.

Functionally, participates in both the initiation and recycling phases of transcription. In the presence of the delta subunit, RNAP displays an increased specificity of transcription, a decreased affinity for nucleic acids, and an increased efficiency of RNA synthesis because of enhanced recycling. This chain is Probable DNA-directed RNA polymerase subunit delta, found in Staphylococcus aureus (strain bovine RF122 / ET3-1).